The following is a 432-amino-acid chain: Adenylosuccinate synthetase (432 aa).

Residues 13 to 19 (GDEGKGK) and 41 to 43 (GHT) each bind GTP. The Proton acceptor role is filled by aspartate 14. Residues aspartate 14 and glycine 41 each coordinate Mg(2+). Residues 14–17 (DEGK), 39–42 (NAGH), threonine 130, arginine 144, glutamine 225, threonine 240, and arginine 304 each bind IMP. The active-site Proton donor is histidine 42. 300-306 (AVTGRPR) provides a ligand contact to substrate. Residues arginine 306, 332-334 (KLD), and 415-417 (STG) each bind GTP.

It belongs to the adenylosuccinate synthetase family. As to quaternary structure, homodimer. Mg(2+) is required as a cofactor.

The protein resides in the cytoplasm. It carries out the reaction IMP + L-aspartate + GTP = N(6)-(1,2-dicarboxyethyl)-AMP + GDP + phosphate + 2 H(+). It participates in purine metabolism; AMP biosynthesis via de novo pathway; AMP from IMP: step 1/2. In terms of biological role, plays an important role in the de novo pathway of purine nucleotide biosynthesis. Catalyzes the first committed step in the biosynthesis of AMP from IMP. The sequence is that of Adenylosuccinate synthetase from Histophilus somni (strain 129Pt) (Haemophilus somnus).